Here is a 505-residue protein sequence, read N- to C-terminus: Salutaridine synthase (505 aa).

A helical membrane pass occupies residues 10–30 (DFWMIACTVIIVFALVKFMFS). A heme-binding site is contributed by Cys-444.

This sequence belongs to the cytochrome P450 family. The cofactor is heme.

The protein localises to the endoplasmic reticulum membrane. It catalyses the reaction (R)-reticuline + reduced [NADPH--hemoprotein reductase] + O2 = salutaridine + oxidized [NADPH--hemoprotein reductase] + 2 H2O + H(+). Its function is as follows. Cytochrome P450 monooxygenase involved in biosynthesis of morphinan-type benzylisoquinoline and opiate alkaloids natural products. Catalyzes the formation of the morphinan alkaloid salutaridine by intramolecular phenol oxidation of (R)-reticuline without the incorporation of oxygen into the product. Can also use (R)-norreticuline as substrate. This Papaver somniferum (Opium poppy) protein is Salutaridine synthase.